Consider the following 234-residue polypeptide: uncharacterized protein (234 aa).

Residues 62-99 (NEESISDLNSDNPGNSEPSDVESFVLSDEDENSEKDFS) are disordered. Over residues 67 to 79 (SDLNSDNPGNSEP) the composition is skewed to polar residues.

This is an uncharacterized protein from Acanthamoeba polyphaga (Amoeba).